A 672-amino-acid polypeptide reads, in one-letter code: Poly-beta-1,6-N-acetyl-D-glucosamine N-deacetylase (672 aa).

The first 20 residues, 1–20 (MLRNGNKYLLMLVSIIMLTA), serve as a signal peptide directing secretion. Cysteine 21 carries the N-palmitoyl cysteine lipid modification. Cysteine 21 carries S-diacylglycerol cysteine lipidation. Positions 107–349 (KAVVLTFDDG…IQRVKDMQIS (243 aa)) constitute a NodB homology domain.

It belongs to the polysaccharide deacetylase family.

The protein resides in the cell outer membrane. Functionally, catalyzes the N-deacetylation of poly-beta-1,6-N-acetyl-D-glucosamine (PGA), a biofilm adhesin polysaccharide. N-deacetylation promotes PGA export through the PgaA porin. This is Poly-beta-1,6-N-acetyl-D-glucosamine N-deacetylase (pgaB) from Escherichia coli (strain K12).